Here is a 293-residue protein sequence, read N- to C-terminus: Sphingolipid C4-hydroxylase sur2 (293 aa).

3 helical membrane passes run 18 to 38 (LVSP…LHYI), 68 to 88 (AVLF…MFEG), and 127 to 147 (FIVP…WQYF). The 135-residue stretch at 136 to 270 (FAFFIIDSWQ…FTFWDHVLGT (135 aa)) folds into the Fatty acid hydroxylase domain.

This sequence belongs to the sterol desaturase family.

It localises to the endoplasmic reticulum membrane. It participates in membrane lipid metabolism; sphingolipid biosynthesis. Functionally, required for hydroxylation of C-4 in the sphingoid moiety of ceramide. Involved in the response to syringomycin. This chain is Sphingolipid C4-hydroxylase sur2 (sur2), found in Schizosaccharomyces pombe (strain 972 / ATCC 24843) (Fission yeast).